The chain runs to 250 residues: Pyrroloquinoline-quinone synthase (250 aa).

The protein belongs to the PqqC family.

It catalyses the reaction 6-(2-amino-2-carboxyethyl)-7,8-dioxo-1,2,3,4,7,8-hexahydroquinoline-2,4-dicarboxylate + 3 O2 = pyrroloquinoline quinone + 2 H2O2 + 2 H2O + H(+). Its pathway is cofactor biosynthesis; pyrroloquinoline quinone biosynthesis. Ring cyclization and eight-electron oxidation of 3a-(2-amino-2-carboxyethyl)-4,5-dioxo-4,5,6,7,8,9-hexahydroquinoline-7,9-dicarboxylic-acid to PQQ. The protein is Pyrroloquinoline-quinone synthase of Xanthomonas axonopodis pv. citri (strain 306).